A 244-amino-acid chain; its full sequence is Phosphoadenosine 5'-phosphosulfate reductase (244 aa).

Cysteine 239 (nucleophile; cysteine thiosulfonate intermediate) is an active-site residue.

Belongs to the PAPS reductase family. CysH subfamily.

The protein localises to the cytoplasm. It catalyses the reaction [thioredoxin]-disulfide + sulfite + adenosine 3',5'-bisphosphate + 2 H(+) = [thioredoxin]-dithiol + 3'-phosphoadenylyl sulfate. It functions in the pathway sulfur metabolism; hydrogen sulfide biosynthesis; sulfite from sulfate: step 3/3. Catalyzes the formation of sulfite from phosphoadenosine 5'-phosphosulfate (PAPS) using thioredoxin as an electron donor. The protein is Phosphoadenosine 5'-phosphosulfate reductase of Shigella boydii serotype 4 (strain Sb227).